A 203-amino-acid chain; its full sequence is Peptidyl-tRNA hydrolase (203 aa).

Position 18 (tyrosine 18) interacts with tRNA. The active-site Proton acceptor is the histidine 23. 3 residues coordinate tRNA: phenylalanine 69, asparagine 71, and asparagine 117.

Belongs to the PTH family. In terms of assembly, monomer.

It localises to the cytoplasm. The enzyme catalyses an N-acyl-L-alpha-aminoacyl-tRNA + H2O = an N-acyl-L-amino acid + a tRNA + H(+). Functionally, hydrolyzes ribosome-free peptidyl-tRNAs (with 1 or more amino acids incorporated), which drop off the ribosome during protein synthesis, or as a result of ribosome stalling. Its function is as follows. Catalyzes the release of premature peptidyl moieties from peptidyl-tRNA molecules trapped in stalled 50S ribosomal subunits, and thus maintains levels of free tRNAs and 50S ribosomes. The chain is Peptidyl-tRNA hydrolase from Prochlorococcus marinus subsp. pastoris (strain CCMP1986 / NIES-2087 / MED4).